The following is a 273-amino-acid chain: NADPH-dependent 7-cyano-7-deazaguanine reductase (273 aa).

80–82 (VES) contacts substrate. Position 82–83 (82–83 (SK)) interacts with NADPH. Cys180 (thioimide intermediate) is an active-site residue. Catalysis depends on Asp187, which acts as the Proton donor. Substrate is bound at residue 219–220 (HE). Residue 248 to 249 (RG) coordinates NADPH.

This sequence belongs to the GTP cyclohydrolase I family. QueF type 2 subfamily. Homodimer.

The protein resides in the cytoplasm. It catalyses the reaction 7-aminomethyl-7-carbaguanine + 2 NADP(+) = 7-cyano-7-deazaguanine + 2 NADPH + 3 H(+). Its pathway is tRNA modification; tRNA-queuosine biosynthesis. In terms of biological role, catalyzes the NADPH-dependent reduction of 7-cyano-7-deazaguanine (preQ0) to 7-aminomethyl-7-deazaguanine (preQ1). The protein is NADPH-dependent 7-cyano-7-deazaguanine reductase of Bordetella pertussis (strain Tohama I / ATCC BAA-589 / NCTC 13251).